We begin with the raw amino-acid sequence, 123 residues long: Snaclec echicetin subunit beta (123 aa).

A C-type lectin domain is found at Asn-1–Cys-121. Disulfide bonds link Cys-2–Cys-13, Cys-30–Cys-119, and Cys-96–Cys-111.

This sequence belongs to the snaclec family. As to quaternary structure, heterodimer of subunits alpha and beta; disulfide-linked. Forms an active complex with the pentameric immunoglobuline Mkappa (IgMkappa). As to expression, expressed by the venom gland.

It is found in the secreted. Functionally, echicetin itself inhibits aggregation of washed platelets induced by vWF, thrombin or alboaggregin-A. However, when complexed with the pentameric plasma immunoglobulin Mkappa (IgMkappa), echicetin binds specifically to GPIb and activates platelets. This is caused by P-selectin expression and activation of alpha-IIb/beta-3 as well as tyrosine phosphorylation of several signal transduction molecules, including p53/56(LYN), p64, p72(SYK), p70 to p90, and p120. In vivo, it induces thrombocytopenia when injected into mice, probably accounting of activation of platelets rather than inhibition. This chain is Snaclec echicetin subunit beta, found in Echis carinatus sochureki (Saw-scaled viper).